The chain runs to 640 residues: Isoniazid-induced protein IniA (640 aa).

The helical transmembrane segment at 497–519 (IGMLSSVVGLGLFNPLSVGAGLI) threads the bilayer. A coiled-coil region spans residues 560–628 (RDRLKMIQRL…QVNDNLAGLE (69 aa)).

As to quaternary structure, forms multimeric structures containing a central pore.

Its subcellular location is the cell membrane. In terms of biological role, participates in the development of tolerance to both isoniazid and ethambutol. May function through a MDR-pump like mechanism, although it does not appear to directly transport isoniazid from the cell. This Mycobacterium tuberculosis (strain CDC 1551 / Oshkosh) protein is Isoniazid-induced protein IniA (iniA).